Consider the following 163-residue polypeptide: Inorganic pyrophosphatase (163 aa).

Glu-9 contributes to the Mg(2+) binding site. 3 residues coordinate substrate: Lys-17, Arg-31, and Tyr-43. Asp-53, Asp-58, Asp-85, and Asp-90 together coordinate Mg(2+). Asp-90 functions as the Proton acceptor in the catalytic mechanism. Substrate is bound at residue Tyr-127.

This sequence belongs to the PPase family. In terms of assembly, homohexamer. Requires Mg(2+) as cofactor.

The protein localises to the cytoplasm. The catalysed reaction is diphosphate + H2O = 2 phosphate + H(+). Functionally, catalyzes the hydrolysis of inorganic pyrophosphate (PPi) forming two phosphate ions. The sequence is that of Inorganic pyrophosphatase from Leifsonia xyli subsp. xyli (strain CTCB07).